Consider the following 416-residue polypeptide: Adenylosuccinate synthetase (416 aa).

GTP-binding positions include 13-19 and 41-43; these read GDEGKGK and GHT. D14 acts as the Proton acceptor in catalysis. Mg(2+) contacts are provided by D14 and G41. Residues 14–17, 39–42, T126, R140, Q220, T235, and R299 each bind IMP; these read DEGK and NAGH. Catalysis depends on H42, which acts as the Proton donor. 295 to 301 contacts substrate; sequence VSTGRKR. GTP contacts are provided by residues R301, 327–329, and 405–407; these read KLD and STS.

The protein belongs to the adenylosuccinate synthetase family. In terms of assembly, homodimer. Requires Mg(2+) as cofactor.

It is found in the cytoplasm. The catalysed reaction is IMP + L-aspartate + GTP = N(6)-(1,2-dicarboxyethyl)-AMP + GDP + phosphate + 2 H(+). It functions in the pathway purine metabolism; AMP biosynthesis via de novo pathway; AMP from IMP: step 1/2. In terms of biological role, plays an important role in the de novo pathway of purine nucleotide biosynthesis. Catalyzes the first committed step in the biosynthesis of AMP from IMP. This is Adenylosuccinate synthetase from Campylobacter lari (strain RM2100 / D67 / ATCC BAA-1060).